Consider the following 87-residue polypeptide: Small ribosomal subunit protein uS19 (87 aa).

It belongs to the universal ribosomal protein uS19 family.

Its function is as follows. Protein S19 forms a complex with S13 that binds strongly to the 16S ribosomal RNA. The protein is Small ribosomal subunit protein uS19 of Mesoplasma florum (strain ATCC 33453 / NBRC 100688 / NCTC 11704 / L1) (Acholeplasma florum).